Here is a 92-residue protein sequence, read N- to C-terminus: uncharacterized protein (92 aa).

The HTH cro/C1-type domain maps to 25–83; it reads LEEKLKQEKIDRKYLAQVTNIPYTTVSRIMRAEANREFNPEIDTILKIAKYFNCTMDEV. The segment at residues 36–55 is a DNA-binding region (H-T-H motif); that stretch reads RKYLAQVTNIPYTTVSRIMR.

This is an uncharacterized protein from Rickettsia prowazekii (strain Madrid E).